We begin with the raw amino-acid sequence, 154 residues long: NADPH-dependent 7-cyano-7-deazaguanine reductase (154 aa).

Residues 1 to 13 (MSVTDVSGLSQLG) show a composition bias toward polar residues. The segment at 1 to 30 (MSVTDVSGLSQLGTKVDTPESPEKAVLEKV) is disordered. Residues 17–27 (DTPESPEKAVL) show a composition bias toward basic and acidic residues. C52 serves as the catalytic Thioimide intermediate. The Proton donor role is filled by D59. Residues 74-76 (VES) and 93-94 (HE) each bind substrate.

It belongs to the GTP cyclohydrolase I family. QueF type 1 subfamily.

It is found in the cytoplasm. The catalysed reaction is 7-aminomethyl-7-carbaguanine + 2 NADP(+) = 7-cyano-7-deazaguanine + 2 NADPH + 3 H(+). Its pathway is tRNA modification; tRNA-queuosine biosynthesis. Catalyzes the NADPH-dependent reduction of 7-cyano-7-deazaguanine (preQ0) to 7-aminomethyl-7-deazaguanine (preQ1). The chain is NADPH-dependent 7-cyano-7-deazaguanine reductase from Agrobacterium fabrum (strain C58 / ATCC 33970) (Agrobacterium tumefaciens (strain C58)).